The chain runs to 588 residues: Juvenile hormone esterase (588 aa).

Residues Met-1 to Ala-23 form the signal peptide. N-linked (GlcNAc...) asparagine glycosylation is found at Asn-79 and Asn-83. A disulfide bridge links Cys-91 with Cys-109. Ser-214 (acyl-ester intermediate) is an active-site residue. N-linked (GlcNAc...) asparagine glycosylation is present at Asn-257. A disulfide bridge links Cys-268 with Cys-281. Glu-350 functions as the Charge relay system in the catalytic mechanism. N-linked (GlcNAc...) asparagine glycans are attached at residues Asn-389, Asn-396, and Asn-472. Catalysis depends on His-479, which acts as the Charge relay system.

It belongs to the type-B carboxylesterase/lipase family.

It localises to the secreted. It catalyses the reaction juvenile hormone III + H2O = juvenile hormone III carboxylate + methanol + H(+). Its activity is regulated as follows. Inhibited by 3-octylthio-1,1,1-trifluoro-2-propanone (OTFP), a specific inhibitor of juvenile hormone esterase (JHE), but not by diisopropyl fluorophosphate (DFP), a serine enzyme inhibitor. Functionally, may function as a juvenile hormone (JH)-specific degradation enzyme in vivo decreasing JH activity. Hydrolyzes JH III in vitro. Hydrolyzes effectively also methyl hepthylthioacetothioate (HEPTAT), a synthetic substrate. Of the general esterase substrates, it has preference for 2-naphthyl acetate (2-NA) and shows a weak activity for 1-NA and 4-nitrophenylacetate (4-NPA). The sequence is that of Juvenile hormone esterase from Tribolium castaneum (Red flour beetle).